Reading from the N-terminus, the 152-residue chain is Protein eva-1 homolog A (152 aa).

Residues 1–60 (MRLPLSHSPEHVEMALLSNILAAYSFVSENPERAALYFVSGVCIGLVLTLAALVIRISCH) are necessary for the localization and biological activity. The helical transmembrane segment at 35–55 (ALYFVSGVCIGLVLTLAALVI) threads the bilayer. Residues 70–97 (KFLQDRESSSDSSDSEDGSEDTVSDLSV) are disordered. The segment covering 82–92 (SDSEDGSEDTV) has biased composition (acidic residues). Thr106 is subject to Phosphothreonine. Ser114 carries the post-translational modification Phosphoserine; by FAM20C.

This sequence belongs to the EVA1 family. In terms of tissue distribution, expressed in lung, kidney, liver, pancreas, placenta, but not in heart and skeletal muscle.

It is found in the endoplasmic reticulum membrane. The protein localises to the lysosome membrane. Its function is as follows. Acts as a regulator of programmed cell death, mediating both autophagy and apoptosis. The chain is Protein eva-1 homolog A (EVA1A) from Homo sapiens (Human).